The sequence spans 481 residues: Aspartyl/glutamyl-tRNA(Asn/Gln) amidotransferase subunit B (481 aa).

The protein belongs to the GatB/GatE family. GatB subfamily. In terms of assembly, heterotrimer of A, B and C subunits.

It catalyses the reaction L-glutamyl-tRNA(Gln) + L-glutamine + ATP + H2O = L-glutaminyl-tRNA(Gln) + L-glutamate + ADP + phosphate + H(+). It carries out the reaction L-aspartyl-tRNA(Asn) + L-glutamine + ATP + H2O = L-asparaginyl-tRNA(Asn) + L-glutamate + ADP + phosphate + 2 H(+). Its function is as follows. Allows the formation of correctly charged Asn-tRNA(Asn) or Gln-tRNA(Gln) through the transamidation of misacylated Asp-tRNA(Asn) or Glu-tRNA(Gln) in organisms which lack either or both of asparaginyl-tRNA or glutaminyl-tRNA synthetases. The reaction takes place in the presence of glutamine and ATP through an activated phospho-Asp-tRNA(Asn) or phospho-Glu-tRNA(Gln). This is Aspartyl/glutamyl-tRNA(Asn/Gln) amidotransferase subunit B from Pseudomonas syringae pv. syringae (strain B728a).